The sequence spans 179 residues: Large ribosomal subunit protein uL5 (179 aa).

The protein belongs to the universal ribosomal protein uL5 family. Part of the 50S ribosomal subunit; part of the 5S rRNA/L5/L18/L25 subcomplex. Contacts the 5S rRNA and the P site tRNA. Forms a bridge to the 30S subunit in the 70S ribosome.

Its function is as follows. This is one of the proteins that bind and probably mediate the attachment of the 5S RNA into the large ribosomal subunit, where it forms part of the central protuberance. In the 70S ribosome it contacts protein S13 of the 30S subunit (bridge B1b), connecting the 2 subunits; this bridge is implicated in subunit movement. Contacts the P site tRNA; the 5S rRNA and some of its associated proteins might help stabilize positioning of ribosome-bound tRNAs. This chain is Large ribosomal subunit protein uL5, found in Methylococcus capsulatus (strain ATCC 33009 / NCIMB 11132 / Bath).